The sequence spans 468 residues: UDP-N-acetylmuramate--L-alanine ligase (468 aa).

121–127 (GSHGKTT) is an ATP binding site.

It belongs to the MurCDEF family.

The protein localises to the cytoplasm. It catalyses the reaction UDP-N-acetyl-alpha-D-muramate + L-alanine + ATP = UDP-N-acetyl-alpha-D-muramoyl-L-alanine + ADP + phosphate + H(+). It participates in cell wall biogenesis; peptidoglycan biosynthesis. In terms of biological role, cell wall formation. This chain is UDP-N-acetylmuramate--L-alanine ligase, found in Borrelia garinii subsp. bavariensis (strain ATCC BAA-2496 / DSM 23469 / PBi) (Borreliella bavariensis).